A 432-amino-acid polypeptide reads, in one-letter code: MSEKLPYKVADISLAAWGRKALDLAENEMPGLMRMREMYSASKPLKGARIAGCLHMTVETAVLIETLVALGAEVRWSSCNIFSTQDHAAAAIAKAGIPVYAWKGETDEEYLWCIEQTLYFKDGPLNMILDDGGDLTNLVHTKYPELLSGIRGISEETTTGVHNLYKMKANGILKVPAINVNDSVTKSKFDNLYGCRESLIDGIKRATDVMIAGKVAVVAGYGDVGKGCAQALRGFGARVIITEIDPINALQAAMEGYEVTTMDEACQEGNIFVTTTGCIDIILGRHFEQMKDDAIVCNIGHFDVEIDVKWLNENAVEKVNIKPQVDRYLLKNGHRIILLAEGRLVNLGCAMGHPSFVMSNSFTNQVLAQIELWTHPDKYPVGVHFLPKKLDEAVAEAHLGKLNVKLTKLTEKQAQYLGMSREGPFKPDHYRY.

Residue S2 is modified to N-acetylserine. Substrate is bound by residues T57, D131, and E156. A Phosphoserine modification is found at S183. Residues 183–350 (SVTKSKFDNL…EGRLVNLGCA (168 aa)) are NAD binding. Residues K186 and D190 each coordinate substrate. N6-(2-hydroxyisobutyryl)lysine is present on K186. Residue Y193 is modified to Phosphotyrosine.

Belongs to the adenosylhomocysteinase family. Homotetramer. Interaction with AHCYL1. NAD(+) serves as cofactor.

It is found in the cytoplasm. It localises to the melanosome. The protein localises to the nucleus. The protein resides in the endoplasmic reticulum. It catalyses the reaction S-adenosyl-L-homocysteine + H2O = L-homocysteine + adenosine. It functions in the pathway amino-acid biosynthesis; L-homocysteine biosynthesis; L-homocysteine from S-adenosyl-L-homocysteine: step 1/1. Its function is as follows. Catalyzes the hydrolysis of S-adenosyl-L-homocysteine to form adenosine and homocysteine. Binds copper ions. In Sus scrofa (Pig), this protein is Adenosylhomocysteinase (AHCY).